Reading from the N-terminus, the 570-residue chain is Methionine--tRNA ligase (570 aa).

Positions 11-21 (PYVQTVPHLGN) match the 'HIGH' region motif. Positions 143, 146, 156, and 159 each coordinate Zn(2+). Positions 333–337 (KFSKS) match the 'KMSKS' region motif. Lysine 336 contributes to the ATP binding site.

This sequence belongs to the class-I aminoacyl-tRNA synthetase family. MetG type 1 subfamily. Zn(2+) serves as cofactor.

The protein resides in the cytoplasm. The enzyme catalyses tRNA(Met) + L-methionine + ATP = L-methionyl-tRNA(Met) + AMP + diphosphate. Its function is as follows. Is required not only for elongation of protein synthesis but also for the initiation of all mRNA translation through initiator tRNA(fMet) aminoacylation. This chain is Methionine--tRNA ligase, found in Pyrobaculum calidifontis (strain DSM 21063 / JCM 11548 / VA1).